A 373-amino-acid chain; its full sequence is NAD(P)H-quinone oxidoreductase subunit 1 (373 aa).

Transmembrane regions (helical) follow at residues 28-48 (LLWLPLPMLLVLVAAVVGVLV), 98-118 (LLFTLGPVLVVVPVIISWLII), 129-149 (VGVGIFLWISFSSIQPIGLLM), 177-197 (LALAVLAIVMMTNSLSTVDIV), 205-225 (ILSWNIWRQPVGFLIFWICAL), 267-287 (VLSAVLVSVLYLGGWGFPIPV), 309-329 (TVGIVMTVLKAYLLVFVAILL), and 348-368 (FLLPLSLVNLLVTAALKLAFP).

The protein belongs to the complex I subunit 1 family. As to quaternary structure, NDH-1 is composed of at least 11 different subunits.

It is found in the cellular thylakoid membrane. The catalysed reaction is a plastoquinone + NADH + (n+1) H(+)(in) = a plastoquinol + NAD(+) + n H(+)(out). It carries out the reaction a plastoquinone + NADPH + (n+1) H(+)(in) = a plastoquinol + NADP(+) + n H(+)(out). In terms of biological role, NDH-1 shuttles electrons from an unknown electron donor, via FMN and iron-sulfur (Fe-S) centers, to quinones in the respiratory and/or the photosynthetic chain. The immediate electron acceptor for the enzyme in this species is believed to be plastoquinone. Couples the redox reaction to proton translocation, and thus conserves the redox energy in a proton gradient. This is NAD(P)H-quinone oxidoreductase subunit 1 from Synechococcus sp. (strain CC9605).